The following is a 519-amino-acid chain: 2-isopropylmalate synthase (519 aa).

The Pyruvate carboxyltransferase domain maps to 5–267 (VIIFDTTLRD…TTNVNPMEIS (263 aa)). Aspartate 14, histidine 202, histidine 204, and asparagine 238 together coordinate Mn(2+). Residues 392-519 (RLESINVQSG…KEQLIHIDQV (128 aa)) are regulatory domain.

Belongs to the alpha-IPM synthase/homocitrate synthase family. LeuA type 1 subfamily. As to quaternary structure, homodimer. The cofactor is Mn(2+).

It localises to the cytoplasm. The catalysed reaction is 3-methyl-2-oxobutanoate + acetyl-CoA + H2O = (2S)-2-isopropylmalate + CoA + H(+). The protein operates within amino-acid biosynthesis; L-leucine biosynthesis; L-leucine from 3-methyl-2-oxobutanoate: step 1/4. Catalyzes the condensation of the acetyl group of acetyl-CoA with 3-methyl-2-oxobutanoate (2-ketoisovalerate) to form 3-carboxy-3-hydroxy-4-methylpentanoate (2-isopropylmalate). The polypeptide is 2-isopropylmalate synthase (Psychromonas ingrahamii (strain DSM 17664 / CCUG 51855 / 37)).